The sequence spans 172 residues: 3-hydroxydecanoyl-[acyl-carrier-protein] dehydratase (172 aa).

His71 is a catalytic residue.

It belongs to the thioester dehydratase family. FabA subfamily. In terms of assembly, homodimer.

The protein localises to the cytoplasm. The catalysed reaction is a (3R)-hydroxyacyl-[ACP] = a (2E)-enoyl-[ACP] + H2O. It catalyses the reaction (3R)-hydroxydecanoyl-[ACP] = (2E)-decenoyl-[ACP] + H2O. It carries out the reaction (2E)-decenoyl-[ACP] = (3Z)-decenoyl-[ACP]. It participates in lipid metabolism; fatty acid biosynthesis. Necessary for the introduction of cis unsaturation into fatty acids. Catalyzes the dehydration of (3R)-3-hydroxydecanoyl-ACP to E-(2)-decenoyl-ACP and then its isomerization to Z-(3)-decenoyl-ACP. Can catalyze the dehydratase reaction for beta-hydroxyacyl-ACPs with saturated chain lengths up to 16:0, being most active on intermediate chain length. This Brucella abortus (strain S19) protein is 3-hydroxydecanoyl-[acyl-carrier-protein] dehydratase.